Reading from the N-terminus, the 173-residue chain is NADH-ubiquinone oxidoreductase chain 6 (173 aa).

The next 5 membrane-spanning stretches (helical) occupy residues 1-21 (MTYFMLFLGLCFVLGGLGVAS), 27-47 (YGVVGLVLASVVGCGWLLSLG), 48-68 (VSFVSLVLFMVYLGGMLVVFV), 87-107 (VVGYGVSFIAVLVVGVVIGGL), and 139-159 (CGVGMFLVAGWGLLLTLFVVL).

This sequence belongs to the complex I subunit 6 family.

It localises to the mitochondrion membrane. The catalysed reaction is a ubiquinone + NADH + 5 H(+)(in) = a ubiquinol + NAD(+) + 4 H(+)(out). Core subunit of the mitochondrial membrane respiratory chain NADH dehydrogenase (Complex I) that is believed to belong to the minimal assembly required for catalysis. Complex I functions in the transfer of electrons from NADH to the respiratory chain. The immediate electron acceptor for the enzyme is believed to be ubiquinone. This Synthliboramphus hypoleucus (Guadalupe murrelet) protein is NADH-ubiquinone oxidoreductase chain 6 (MT-ND6).